The chain runs to 624 residues: Probable potassium transport system protein Kup 1 (624 aa).

Helical transmembrane passes span 10–30, 48–68, 94–114, 133–153, 159–179, 210–230, 242–262, 270–290, 331–351, 363–383, 388–408, and 413–433; these read LALGALGVVFGDIGTSPLYAL, LSLIFWSLIIVVSFKYLMIIF, PLFYIVAIFGAGLLLGDGMLT, LYPYVLPIASLILILLFSLQA, IGYLFGPLILVWFITIAILGI, LLLGGIFLVVTGGEALFADIG, FFAALPCLLLNYFGQGANLIV, PFFMIAPSWFYLPLIIIATVA, IYVPQINFILFIGTMAFCLAF, IAVNLEMLLVDAMVAYAAISI, IFNVMFLFGLFLLIDLAFLGA, and FITGGWVPIVLAFFIAFIMYS.

This sequence belongs to the HAK/KUP transporter (TC 2.A.72) family.

It localises to the cell inner membrane. It catalyses the reaction K(+)(in) + H(+)(in) = K(+)(out) + H(+)(out). Transport of potassium into the cell. Likely operates as a K(+):H(+) symporter. The chain is Probable potassium transport system protein Kup 1 from Legionella pneumophila (strain Lens).